A 227-amino-acid chain; its full sequence is 7-cyano-7-deazaguanine synthase (227 aa).

8-18 (FSGGQDSTTCL) contributes to the ATP binding site. Residues Cys-187, Cys-196, Cys-199, and Cys-202 each coordinate Zn(2+).

The protein belongs to the QueC family. Zn(2+) is required as a cofactor.

The enzyme catalyses 7-carboxy-7-deazaguanine + NH4(+) + ATP = 7-cyano-7-deazaguanine + ADP + phosphate + H2O + H(+). The protein operates within purine metabolism; 7-cyano-7-deazaguanine biosynthesis. Catalyzes the ATP-dependent conversion of 7-carboxy-7-deazaguanine (CDG) to 7-cyano-7-deazaguanine (preQ(0)). The polypeptide is 7-cyano-7-deazaguanine synthase (Aliivibrio fischeri (strain MJ11) (Vibrio fischeri)).